Here is a 543-residue protein sequence, read N- to C-terminus: Zinc finger protein egl-43 (543 aa).

Residues 2-62 (SIDTDFLTSV…NLIKEADDGE (61 aa)) form a positive regulatory (PR) domain region. 2 C2H2-type zinc fingers span residues 159–181 (HKCGVCPKSFSSASGLKQHSHIH) and 187–209 (FRCHLCPKSYTQFSNLCRHRRVH). The segment at 213-233 (WTCPTCQSQMPSQAALTKHRP) adopts a C2H2-type 3; atypical zinc-finger fold. The segment at 299-380 (PDAECSSGHA…TSTKKRPTSH (82 aa)) is disordered. Over residues 306 to 317 (GHASESSPTTTE) the composition is skewed to polar residues. Over residues 335–348 (TTSKSDDGEDRDSI) the composition is skewed to basic and acidic residues. 2 consecutive C2H2-type zinc fingers follow at residues 444–466 (YTCKFCQKVFPRSANLTRHLRTH) and 472–495 (YKCQYCERSFSISSNLQRHVRNIH). The disordered stretch occupies residues 496-543 (NKPNTSLTPHNHHRQRSLHNSTSTSTTTTTVHHPLLHLPGTSVPVPKV). Residues 513–533 (LHNSTSTSTTTTTVHHPLLHL) show a composition bias toward low complexity.

The protein localises to the nucleus. Its function is as follows. Probable transcription factor, required for migration of the hermaphrodite-specific motor neurons (HSNs) from the tail to the gonad primordium during HSN cell differentiation. Required for phasmid neuron development. Required to specify the pi-cell fate of ventral uterine precursor cell (VU) cells. In terms of biological role, probable transcription factor, involved in lin-12 (Notch)-dependent anchor cell (AC) and ventral uterine (VU) precursor cell fate specification and in AC invasion. Prevents AC proliferation after AC cell specification by repressing lin-12 expression. May form a positive feedback loop, together with the transcription factor fos-1, that maintains mutual high levels of expression and so activates AC invasion. Functionally, dispensable for anchor cell (AC) invasion and for preventing AC proliferation. The protein is Zinc finger protein egl-43 of Caenorhabditis elegans.